The sequence spans 382 residues: MHLPTLSLVEELIARRSVTPDDAGCQALIAARLAALGFEIHALPHGPADARVDNLWAIRRGQGDGPTLVLAGHTDVVPTGPLERWHSDPFVPSHRAGLLYGRGAADMKTSLAAMVVAVEEFVAAHPVHRGSVAFLLTSDEEGPAVDGTVKVCEWLAARGERLDACIVGEPTSVRQLGDMIKNGRRGSLSGRLTVVGQQGHIAYPHLARNPIHLAAPALAELAQQRWDDGNEHFPPTSWQMSNIHAGTGATNVIPGELVVDFNFRFSTESTPESLQQQVHALLDRHGLEHRIAWTLGGRPFLTRPGSLTDALSQAITAVTGLRTELSTTGGTSDGRFIAQICPQVVEFGPVNATIHQVDEHCEVAALGPLKDIYRRTLEAMLA.

His-73 is a Zn(2+) binding site. Asp-75 is a catalytic residue. Residue Asp-106 coordinates Zn(2+). Residue Glu-140 is the Proton acceptor of the active site. Residues Glu-141, Glu-169, and His-355 each coordinate Zn(2+).

Belongs to the peptidase M20A family. DapE subfamily. In terms of assembly, homodimer. The cofactor is Zn(2+). Co(2+) is required as a cofactor.

The enzyme catalyses N-succinyl-(2S,6S)-2,6-diaminopimelate + H2O = (2S,6S)-2,6-diaminopimelate + succinate. It functions in the pathway amino-acid biosynthesis; L-lysine biosynthesis via DAP pathway; LL-2,6-diaminopimelate from (S)-tetrahydrodipicolinate (succinylase route): step 3/3. Catalyzes the hydrolysis of N-succinyl-L,L-diaminopimelic acid (SDAP), forming succinate and LL-2,6-diaminopimelate (DAP), an intermediate involved in the bacterial biosynthesis of lysine and meso-diaminopimelic acid, an essential component of bacterial cell walls. In Leptothrix cholodnii (strain ATCC 51168 / LMG 8142 / SP-6) (Leptothrix discophora (strain SP-6)), this protein is Succinyl-diaminopimelate desuccinylase.